The primary structure comprises 172 residues: Cystatin-like cysteine protease inhibitor EPIC4 (172 aa).

Positions 1 to 17 (MRASLSILVAFPALAAA) are cleaved as a signal peptide. The short motif at 71-75 (QVVAG) is the Secondary area of contact element. Residues 129 to 172 (EAATASSSSTPAPTPASTSTSASSSEETMLQSSVQQRAMFSDFV) are disordered. Positions 130-156 (AATASSSSTPAPTPASTSTSASSSEET) are enriched in low complexity. The span at 157–166 (MLQSSVQQRA) shows a compositional bias: polar residues.

It belongs to the cystatin family.

The protein localises to the secreted. Secreted effector that interacts with and inhibits host apoplastic pathogenesis-related papain-like cysteine proteases. Inhibition of host proteases by a pathogen extracellular protease inhibitor forms a specific type of defense-counterdefense mechanism between plants and microbial pathogens. This Phytophthora infestans (Potato late blight agent) protein is Cystatin-like cysteine protease inhibitor EPIC4.